The sequence spans 627 residues: Altered inheritance of mitochondria protein 9, mitochondrial (627 aa).

The N-terminal 43 residues, 1 to 43 (MIRYTVAGHSRRCVVGASKRVGAIKCITVAATKRFISNKSNEV), are a transit peptide targeting the mitochondrion.

Belongs to the AIM9 family.

The protein localises to the mitochondrion. The sequence is that of Altered inheritance of mitochondria protein 9, mitochondrial (AIM9) from Saccharomyces cerevisiae (strain JAY291) (Baker's yeast).